Here is a 309-residue protein sequence, read N- to C-terminus: uncharacterized protein (309 aa).

In terms of domain architecture, Radical SAM core spans 17-254; it reads RYGQKVHKLT…AGEMIRHTPP (238 aa). The [4Fe-4S] cluster site is built by cysteine 33, cysteine 45, and cysteine 48.

This sequence belongs to the radical SAM superfamily. Requires [4Fe-4S] cluster as cofactor.

This is an uncharacterized protein from Escherichia coli O157:H7.